The chain runs to 690 residues: Xylosyl- and glucuronyltransferase LARGE2 (690 aa).

Residues 1–7 (MLPRGRP) lie on the Cytoplasmic side of the membrane. Residues 8–28 (RALGAALLLLLLLVVGFFLFG) traverse the membrane as a helical; Signal-anchor for type II membrane protein segment. The Lumenal segment spans residues 29–690 (RDPEYGLGTT…TALQQSRSRA (662 aa)). Asn-50 and Asn-77 each carry an N-linked (GlcNAc...) asparagine glycan. The segment at 67–342 (LHVAIVCAGY…FLGFDGKLLC (276 aa)) is xylosyltransferase activity. Asp-171 and Asp-173 together coordinate Mn(2+). A glycan (N-linked (GlcNAc...) asparagine) is linked at Asn-201. Residues 343–686 (RELFGCPNQF…LKYLTALQQS (344 aa)) are glucuronyltransferase activity. Residues Asp-491 and Asp-493 each coordinate Mn(2+).

This sequence in the C-terminal section; belongs to the glycosyltransferase 49 family. In the N-terminal section; belongs to the glycosyltransferase 8 family. As to quaternary structure, interacts with B4GAT1. Requires Mn(2+) as cofactor.

It is found in the golgi apparatus membrane. It catalyses the reaction 3-O-[beta-D-GlcA-(1-&gt;3)-beta-D-Xyl-(1-&gt;4)-Rib-ol-P-Rib-ol-P-3-beta-D-GalNAc-(1-&gt;3)-beta-D-GlcNAc-(1-&gt;4)-(O-6-P-alpha-D-Man)]-Thr-[protein] + UDP-alpha-D-xylose = 3-O-[alpha-D-Xyl-(1-&gt;3)-beta-D-GlcA-(1-&gt;4)-beta-D-Xyl-(1-&gt;4)-Rib-ol-P-Rib-ol-P-3-beta-D-GalNAc-(1-&gt;3)-beta-D-GlcNAc-(1-&gt;4)-(O-6-P-alpha-D-Man)]-Thr-[protein] + UDP + H(+). The catalysed reaction is 3-O-{(1-&gt;[3)-alpha-D-Xyl-(1-&gt;3)-beta-D-GlcA-(1-&gt;](n)-4)-beta-D-Xyl-(1-&gt;4)-Rib-ol-P-Rib-ol-P-3-beta-D-GalNAc-(1-&gt;3)-beta-D-GlcNAc-(1-&gt;4)-O-6-P-alpha-D-Man}-L-Thr-[protein] + UDP-alpha-D-glucuronate = 3-O-{beta-D-GlcA-(1-&gt;[3)-alpha-D-Xyl-(1-&gt;3)-beta-D-GlcA-(1-&gt;](n)-4)-beta-D-Xyl-(1-&gt;4)-Rib-ol-P-Rib-ol-P-3-beta-D-GalNAc-(1-&gt;3)-beta-D-GlcNAc-(1-&gt;4)-O-6-P-alpha-D-Man}-L-Thr-[protein] + UDP + H(+). It carries out the reaction 3-O-{beta-D-GlcA-(1-&gt;[3)-alpha-D-Xyl-(1-&gt;3)-beta-D-GlcA-(1-&gt;](n)-4)-beta-D-Xyl-(1-&gt;4)-Rib-ol-P-Rib-ol-P-3-beta-D-GalNAc-(1-&gt;3)-beta-D-GlcNAc-(1-&gt;4)-O-6-P-alpha-D-Man}-L-Thr-[protein] + UDP-alpha-D-xylose = 3-O-{(1-&gt;[3)-alpha-D-Xyl-(1-&gt;3)-beta-D-GlcA-(1-&gt;](n+1)-4)-beta-D-Xyl-(1-&gt;4)-Rib-ol-P-Rib-ol-P-3-beta-D-GalNAc-(1-&gt;3)-beta-D-GlcNAc-(1-&gt;4)-O-6-P-alpha-D-Man}-L-Thr-[protein] + UDP + H(+). It functions in the pathway protein modification; protein glycosylation. Functionally, bifunctional glycosyltransferase with both alpha-1,3-xylosyltransferase and beta-1,3-glucuronyltransferase activities involved in the maturation of alpha-dystroglycan (DAG1) by glycosylation leading to DAG1 binding to laminin G-like domain-containing extracellular proteins with high affinity and in a phosphorylated-O-mannosyl trisaccharide dependent manner. Elongates the glucuronyl-beta-1,4-xylose-beta disaccharide primer structure by adding repeating units [-3-Xylose-alpha-1,3-GlcA-beta-1-] to produce a heteropolysaccharide. Supports the maturation of DAG1 more effectively than LARGE1. In addition, can modify both heparan sulfate (HS)- and chondroitin/dermatan sulfate (CS/DS)-proteoglycans (PGs), namely GPC4, with a glycosaminoglycan (GAG)-like polysaccharide composed of xylose and glucuronic acid to confer laminin binding. The sequence is that of Xylosyl- and glucuronyltransferase LARGE2 from Rattus norvegicus (Rat).